The following is a 62-amino-acid chain: UPF0291 protein CLI_2672 (62 aa).

It belongs to the UPF0291 family.

The protein resides in the cytoplasm. This is UPF0291 protein CLI_2672 from Clostridium botulinum (strain Langeland / NCTC 10281 / Type F).